Reading from the N-terminus, the 200-residue chain is Dephospho-CoA kinase (200 aa).

In terms of domain architecture, DPCK spans 4 to 200 (TIGLTGSVAT…TFIERFVKNK (197 aa)). ATP is bound at residue 12–17 (ATGKST).

The protein belongs to the CoaE family.

The protein localises to the cytoplasm. It catalyses the reaction 3'-dephospho-CoA + ATP = ADP + CoA + H(+). It functions in the pathway cofactor biosynthesis; coenzyme A biosynthesis; CoA from (R)-pantothenate: step 5/5. In terms of biological role, catalyzes the phosphorylation of the 3'-hydroxyl group of dephosphocoenzyme A to form coenzyme A. The chain is Dephospho-CoA kinase from Listeria monocytogenes serovar 1/2a (strain ATCC BAA-679 / EGD-e).